Reading from the N-terminus, the 244-residue chain is HTH-type transcriptional regulator RdgA (244 aa).

One can recognise an HTH cro/C1-type domain in the interval 9 to 62 (LKTARTAQGLSQKALGDMIGVSQAAIQKIEVGKASQTTKIVELSNNLRVRPEWL). A DNA-binding region (H-T-H motif) is located at residues 20 to 39 (QKALGDMIGVSQAAIQKIEV).

Its function is as follows. Regulates pectin lyase production in response to DNA damage. This is HTH-type transcriptional regulator RdgA (rdgA) from Pectobacterium carotovorum subsp. carotovorum (Erwinia carotovora subsp. carotovora).